The chain runs to 224 residues: Ribosome maturation factor RimM (224 aa).

Low complexity predominate over residues 1-12 (MARRPGSSSRGP). 2 disordered regions span residues 1–46 (MARR…PSLV) and 204–224 (VADPPEDLFAPPGPKPADDPG). One can recognise a PRC barrel domain in the interval 137 to 211 (EDEFFLTDLI…KVVADPPEDL (75 aa)).

It belongs to the RimM family. As to quaternary structure, binds ribosomal protein uS19.

The protein localises to the cytoplasm. Its function is as follows. An accessory protein needed during the final step in the assembly of 30S ribosomal subunit, possibly for assembly of the head region. Essential for efficient processing of 16S rRNA. May be needed both before and after RbfA during the maturation of 16S rRNA. It has affinity for free ribosomal 30S subunits but not for 70S ribosomes. The sequence is that of Ribosome maturation factor RimM from Methylorubrum populi (strain ATCC BAA-705 / NCIMB 13946 / BJ001) (Methylobacterium populi).